The following is a 680-amino-acid chain: DNA-directed RNA polymerase subunit beta' (680 aa).

Zn(2+)-binding residues include cysteine 69, cysteine 71, cysteine 87, and cysteine 90. Residues aspartate 489, aspartate 491, and aspartate 493 each coordinate Mg(2+).

This sequence belongs to the RNA polymerase beta' chain family. RpoC1 subfamily. In plastids the minimal PEP RNA polymerase catalytic core is composed of four subunits: alpha, beta, beta', and beta''. When a (nuclear-encoded) sigma factor is associated with the core the holoenzyme is formed, which can initiate transcription. The cofactor is Mg(2+). Zn(2+) serves as cofactor.

Its subcellular location is the plastid. The protein localises to the chloroplast. The catalysed reaction is RNA(n) + a ribonucleoside 5'-triphosphate = RNA(n+1) + diphosphate. Functionally, DNA-dependent RNA polymerase catalyzes the transcription of DNA into RNA using the four ribonucleoside triphosphates as substrates. The protein is DNA-directed RNA polymerase subunit beta' of Barbarea verna (Land cress).